A 786-amino-acid chain; its full sequence is LPS-assembly protein LptD (786 aa).

The first 39 residues, 1-39 (MPPKPLFPNVFPGDGAPRKRRLALALLAVPGLVPAVSYA), serve as a signal peptide directing secretion. Positions 767–786 (PGYTPLPPPPPPMSRFSNYE) are disordered. A compositionally biased stretch (pro residues) spans 770 to 779 (TPLPPPPPPM).

It belongs to the LptD family. As to quaternary structure, component of the lipopolysaccharide transport and assembly complex. Interacts with LptE and LptA.

It is found in the cell outer membrane. In terms of biological role, together with LptE, is involved in the assembly of lipopolysaccharide (LPS) at the surface of the outer membrane. In Burkholderia cenocepacia (strain HI2424), this protein is LPS-assembly protein LptD.